Here is a 376-residue protein sequence, read N- to C-terminus: MSKKRVAIIFGGQSSEHEVSRVSAQSVIENIDKQKYDVEIIGITKSGQWLKYDGPVEKIGNGDWEAIAQKKPVESLSQAGISSSGITTVNSVRQIMPGNVKAPIDVIFPVLHGCNGEDGTIQGLFELAGIPYVGCGVLGSAVGMDKAYTKIIFEKEGLPQGDYLVFNRKQVYNRIEDVVAQIEGRLTYPCFVKPSNAGSSVGVNKASDRESLVKALNIAAKNDRRILVEEFINGREIECAVLGNDNPVASTVGEVVPCNDFYDYEAKYQVGDSSKVVIPAPNLSKETVEKIREYAVRAFKCLDCAGLSRVDFFVHKETGEIYINEINTLPGFTQISMYPKLWAASGIPYSELINKLIELAFERYEDTRREYTNTLD.

Positions 150–358 constitute an ATP-grasp domain; that stretch reads KIIFEKEGLP…YSELINKLIE (209 aa). 183-238 is a binding site for ATP; the sequence is EGRLTYPCFVKPSNAGSSVGVNKASDRESLVKALNIAAKNDRRILVEEFINGREIE. Mg(2+) contacts are provided by aspartate 311, glutamate 325, and asparagine 327.

Belongs to the D-alanine--D-alanine ligase family. The cofactor is Mg(2+). Mn(2+) serves as cofactor.

It localises to the cytoplasm. It carries out the reaction 2 D-alanine + ATP = D-alanyl-D-alanine + ADP + phosphate + H(+). Its pathway is cell wall biogenesis; peptidoglycan biosynthesis. Cell wall formation. The chain is D-alanine--D-alanine ligase from Ruminiclostridium cellulolyticum (strain ATCC 35319 / DSM 5812 / JCM 6584 / H10) (Clostridium cellulolyticum).